Consider the following 695-residue polypeptide: Probable serine/threonine-protein kinase abkD (695 aa).

The span at 105 to 119 (TTKPQPCQAKPPSSK) shows a compositional bias: polar residues. The segment at 105 to 149 (TTKPQPCQAKPPSSKQQQQQQQQQQQQQQQQQQQQSKKKTSKDRL) is disordered. Residues 118-150 (SKQQQQQQQQQQQQQQQQQQQQSKKKTSKDRLR) adopt a coiled-coil conformation. Residues 120–139 (QQQQQQQQQQQQQQQQQQQQ) are compositionally biased toward low complexity. The helical transmembrane segment at 177-193 (TIASILAAIALIIYSYE) threads the bilayer. The Protein kinase domain occupies 317–695 (DFDRLPIAAA…LIKDQMKKLG (379 aa)). Residues 323–331 (IAAASLAQV) and Lys-345 each bind ATP. The active-site Proton acceptor is Asp-477.

It belongs to the protein kinase superfamily. ADCK protein kinase family.

It is found in the membrane. The polypeptide is Probable serine/threonine-protein kinase abkD (abkD) (Dictyostelium discoideum (Social amoeba)).